The primary structure comprises 353 residues: Protein RecA (353 aa).

Residue Gly67–Thr74 participates in ATP binding. A disordered region spans residues Ser330–Phe353. The span at Ser339 to Phe353 shows a compositional bias: acidic residues.

It belongs to the RecA family.

The protein resides in the cytoplasm. Can catalyze the hydrolysis of ATP in the presence of single-stranded DNA, the ATP-dependent uptake of single-stranded DNA by duplex DNA, and the ATP-dependent hybridization of homologous single-stranded DNAs. It interacts with LexA causing its activation and leading to its autocatalytic cleavage. The polypeptide is Protein RecA (Shigella sonnei).